The following is a 678-amino-acid chain: DNA gyrase subunit B (678 aa).

The Toprim domain occupies 456–570; the sequence is SELYVVEGDS…HGYVFLAQPP (115 aa). Positions 462, 535, and 537 each coordinate Mg(2+).

The protein belongs to the type II topoisomerase GyrB family. Heterotetramer, composed of two GyrA and two GyrB chains. In the heterotetramer, GyrA contains the active site tyrosine that forms a transient covalent intermediate with the DNA, while GyrB binds cofactors catalyzes ATP hydrolysis. Requires Mg(2+) as cofactor. Mn(2+) serves as cofactor. The cofactor is Ca(2+).

The protein localises to the cytoplasm. It catalyses the reaction ATP-dependent breakage, passage and rejoining of double-stranded DNA.. With respect to regulation, DNA supercoiling is inhibited by fluoroquinolones; IC(50) 1 ug/ml for sitafloxacin. In terms of biological role, a type II topoisomerase that negatively supercoils closed circular double-stranded (ds) DNA in an ATP-dependent manner to modulate DNA topology and maintain chromosomes in an underwound state. Negative supercoiling favors strand separation, and DNA replication, transcription, recombination and repair, all of which involve strand separation. Also able to catalyze the interconversion of other topological isomers of dsDNA rings, including catenanes and knotted rings. Type II topoisomerases break and join 2 DNA strands simultaneously in an ATP-dependent manner. The polypeptide is DNA gyrase subunit B (Mycobacterium leprae (strain TN)).